Reading from the N-terminus, the 605-residue chain is Putative zinc finger CCCH domain-containing protein 57 (605 aa).

Disordered stretches follow at residues 198–218 (RHTG…GREV), 238–261 (LLQD…DGEV), and 375–403 (QASH…YQQP). Composition is skewed to basic and acidic residues over residues 201 to 218 (GHES…GREV) and 238 to 250 (LLQD…RADA). A compositionally biased stretch (low complexity) spans 389–403 (FPFQQQPQHDGYQQP). 2 consecutive C3H1-type zinc fingers follow at residues 519–547 (EPKT…HSQD) and 557–585 (KYRT…QHRL).

This chain is Putative zinc finger CCCH domain-containing protein 57, found in Oryza sativa subsp. japonica (Rice).